The sequence spans 225 residues: Cytidylate kinase (225 aa).

An ATP-binding site is contributed by 11–19 (GPAAAGKST).

The protein belongs to the cytidylate kinase family. Type 1 subfamily.

It is found in the cytoplasm. The catalysed reaction is CMP + ATP = CDP + ADP. It carries out the reaction dCMP + ATP = dCDP + ADP. The polypeptide is Cytidylate kinase (Bacillus cereus (strain G9842)).